A 250-amino-acid chain; its full sequence is Cell division protein FtsQ (250 aa).

Residues 1 to 11 (MWNNVRQLNLA) are Cytoplasmic-facing. A helical transmembrane segment spans residues 12 to 32 (ASALYALLLLVLAAAGCYWLI). Topologically, residues 33–250 (QRPAFALREI…FLTDTDKGKK (218 aa)) are periplasmic. Positions 37–106 (FALREIRIDG…NALAVTLEEY (70 aa)) constitute a POTRA domain.

Belongs to the FtsQ/DivIB family. FtsQ subfamily. Part of a complex composed of FtsB, FtsL and FtsQ.

The protein localises to the cell inner membrane. In terms of biological role, essential cell division protein. May link together the upstream cell division proteins, which are predominantly cytoplasmic, with the downstream cell division proteins, which are predominantly periplasmic. May control correct divisome assembly. This chain is Cell division protein FtsQ, found in Burkholderia pseudomallei (strain K96243).